A 453-amino-acid polypeptide reads, in one-letter code: Cytochrome b-c1 complex subunit 2, mitochondrial (453 aa).

The transit peptide at 1–14 (MKLLTRAGSLSRFY) directs the protein to the mitochondrion. Lys66, Lys199, and Lys250 each carry N6-acetyllysine.

Belongs to the peptidase M16 family. UQCRC2/QCR2 subfamily. In terms of assembly, component of the ubiquinol-cytochrome c oxidoreductase (cytochrome b-c1 complex, complex III, CIII), a multisubunit enzyme composed of 11 subunits. The complex is composed of 3 respiratory subunits cytochrome b, cytochrome c1 and Rieske protein UQCRFS1, 2 core protein subunits UQCRC1/QCR1 and UQCRC2/QCR2, and 6 low-molecular weight protein subunits UQCRH/QCR6, UQCRB/QCR7, UQCRQ/QCR8, UQCR10/QCR9, UQCR11/QCR10 and subunit 9, the cleavage product of Rieske protein UQCRFS1. The complex exists as an obligatory dimer and forms supercomplexes (SCs) in the inner mitochondrial membrane with NADH-ubiquinone oxidoreductase (complex I, CI) and cytochrome c oxidase (complex IV, CIV), resulting in different assemblies (supercomplex SCI(1)III(2)IV(1) and megacomplex MCI(2)III(2)IV(2)). Interacts with RAB5IF. Interacts with STMP1.

The protein localises to the mitochondrion inner membrane. In terms of biological role, component of the ubiquinol-cytochrome c oxidoreductase, a multisubunit transmembrane complex that is part of the mitochondrial electron transport chain which drives oxidative phosphorylation. The respiratory chain contains 3 multisubunit complexes succinate dehydrogenase (complex II, CII), ubiquinol-cytochrome c oxidoreductase (cytochrome b-c1 complex, complex III, CIII) and cytochrome c oxidase (complex IV, CIV), that cooperate to transfer electrons derived from NADH and succinate to molecular oxygen, creating an electrochemical gradient over the inner membrane that drives transmembrane transport and the ATP synthase. The cytochrome b-c1 complex catalyzes electron transfer from ubiquinol to cytochrome c, linking this redox reaction to translocation of protons across the mitochondrial inner membrane, with protons being carried across the membrane as hydrogens on the quinol. In the process called Q cycle, 2 protons are consumed from the matrix, 4 protons are released into the intermembrane space and 2 electrons are passed to cytochrome c. The 2 core subunits UQCRC1/QCR1 and UQCRC2/QCR2 are homologous to the 2 mitochondrial-processing peptidase (MPP) subunits beta-MPP and alpha-MPP respectively, and they seem to have preserved their MPP processing properties. May be involved in the in situ processing of UQCRFS1 into the mature Rieske protein and its mitochondrial targeting sequence (MTS)/subunit 9 when incorporated into complex III. The protein is Cytochrome b-c1 complex subunit 2, mitochondrial (UQCRC2) of Bos taurus (Bovine).